Consider the following 365-residue polypeptide: Snurportin-1 (365 aa).

The IBB domain maps to 10-72; it reads GGVALAAPNS…RLAEGDWAGV (63 aa). Disordered regions lie at residues 15–34 and 69–90; these read AAPN…KGRG and WAGV…EMEV. Residues 73 to 90 are compositionally biased toward acidic residues; sequence ESDEDGGEDGDGEEEMEV. The segment at 129–131 is interaction with m3G-cap structure; the sequence is GKR. The tract at residues 211–333 is necessary for binding to the m3G-cap structure; that stretch reads LSSKIQEEEG…GKAQPSAEAA (123 aa). Positions 317–365 are disordered; the sequence is RSKKLAAGKAQPSAEAAARNGHYELEHLSTPQPANSAQGQEEAGSQMEN. Residues 345–355 show a composition bias toward polar residues; that stretch reads STPQPANSAQG.

The protein belongs to the snurportin family.

It is found in the nucleus. It localises to the cytoplasm. Its function is as follows. Functions as an U snRNP-specific nuclear import adapter. Involved in the trimethylguanosine (m3G)-cap-dependent nuclear import of U snRNPs. Binds specifically to the terminal m3G-cap U snRNAs. The chain is Snurportin-1 (SNUPN) from Gallus gallus (Chicken).